The sequence spans 123 residues: UPF0102 protein CLD_2200 (123 aa).

This sequence belongs to the UPF0102 family.

This is UPF0102 protein CLD_2200 from Clostridium botulinum (strain Okra / Type B1).